Here is a 138-residue protein sequence, read N- to C-terminus: uncharacterized protein (138 aa).

A helical transmembrane segment spans residues 19–40 (ECKVSVISFFLLAFLLMAHIWL). 3 repeat units span residues 94-106 (KGEI…KKEG), 107-119 (KGEI…KKEG), and 120-132 (KGEI…KKEV). Residues 94 to 132 (KGEIEGKEEKKEGKGEIEGKEEKKEGKGEIEGKEEKKEV) are 3 X 13 AA tandem repeats of K-G-E-I-E-G-K-E-E-K-K-E-[GV]. The interval 98-138 (EGKEEKKEGKGEIEGKEEKKEGKGEIEGKEEKKEVENGPRK) is disordered.

Expressed in roots, leaves and flowers.

It is found in the mitochondrion membrane. Its function is as follows. Involved in cytoplasmic male sterility (CMS) by leading to pollen abortion. Not expressed in fertile (normal) plants. This is an uncharacterized protein from Raphanus sativus (Radish).